The following is a 284-amino-acid chain: Nucleotide-binding protein in ptsO 5'region (284 aa).

8 to 15 (GRSGSGKS) contacts ATP. 60–63 (DARN) contributes to the GTP binding site.

Belongs to the RapZ-like family.

In terms of biological role, displays ATPase and GTPase activities. The polypeptide is Nucleotide-binding protein in ptsO 5'region (Pseudomonas putida (Arthrobacter siderocapsulatus)).